The following is a 188-amino-acid chain: Pyridoxal 5'-phosphate synthase subunit PdxT (188 aa).

Position 47–49 (47–49 (GES)) interacts with L-glutamine. The active-site Nucleophile is the Cys-79. Residues Arg-105 and 134–135 (IR) contribute to the L-glutamine site. Catalysis depends on charge relay system residues His-170 and Glu-172.

The protein belongs to the glutaminase PdxT/SNO family. In the presence of PdxS, forms a dodecamer of heterodimers. Only shows activity in the heterodimer.

The enzyme catalyses aldehydo-D-ribose 5-phosphate + D-glyceraldehyde 3-phosphate + L-glutamine = pyridoxal 5'-phosphate + L-glutamate + phosphate + 3 H2O + H(+). It catalyses the reaction L-glutamine + H2O = L-glutamate + NH4(+). The protein operates within cofactor biosynthesis; pyridoxal 5'-phosphate biosynthesis. Catalyzes the hydrolysis of glutamine to glutamate and ammonia as part of the biosynthesis of pyridoxal 5'-phosphate. The resulting ammonia molecule is channeled to the active site of PdxS. This chain is Pyridoxal 5'-phosphate synthase subunit PdxT, found in Listeria monocytogenes serotype 4b (strain F2365).